A 369-amino-acid polypeptide reads, in one-letter code: Eukaryotic translation initiation factor 3 subunit F (369 aa).

The 140-residue stretch at 31-170 (VNIQPQAVFS…TKTYISAPVA (140 aa)) folds into the MPN domain. The span at 309–334 (LDEGKEGGEKKDGEGAEGDKKTDGQR) shows a compositional bias: basic and acidic residues. Positions 309–369 (LDEGKEGGEK…EPREPREAAE (61 aa)) are disordered. Residues 335–353 (GQRGQGGKRGGRSGGAGGR) are compositionally biased toward gly residues. The segment covering 354–369 (GGREQREPREPREAAE) has biased composition (basic and acidic residues).

Belongs to the eIF-3 subunit F family. In terms of assembly, component of the eukaryotic translation initiation factor 3 (eIF-3) complex.

Its subcellular location is the cytoplasm. Functionally, component of the eukaryotic translation initiation factor 3 (eIF-3) complex, which is involved in protein synthesis of a specialized repertoire of mRNAs and, together with other initiation factors, stimulates binding of mRNA and methionyl-tRNAi to the 40S ribosome. The eIF-3 complex specifically targets and initiates translation of a subset of mRNAs involved in cell proliferation. This chain is Eukaryotic translation initiation factor 3 subunit F, found in Neurospora crassa (strain ATCC 24698 / 74-OR23-1A / CBS 708.71 / DSM 1257 / FGSC 987).